The following is a 428-amino-acid chain: Dihydrolipoyllysine-residue acetyltransferase component of pyruvate dehydrogenase complex (428 aa).

Residues 2–77 (AFEFKLPDIG…TVGQTLITLD (76 aa)) form the Lipoyl-binding domain. Position 43 is an N6-lipoyllysine (lysine 43). Residues 88-123 (GQEQEEAKKEEKTETVSKEEKVDAVAPNAPAAEAEA) are disordered. Positions 89–110 (QEQEEAKKEEKTETVSKEEKVD) are enriched in basic and acidic residues. The span at 111–123 (AVAPNAPAAEAEA) shows a compositional bias: low complexity. Positions 130 to 167 (IAMPSVRKYAREKGVDIRLVQGTGKNGRVLKEDIDAFL) constitute a Peripheral subunit-binding (PSBD) domain. Positions 177–194 (AAEEKAAPAAAKPATTEG) are enriched in low complexity. The segment at 177–201 (AAEEKAAPAAAKPATTEGEFPETRE) is disordered. Histidine 399 is a catalytic residue.

It belongs to the 2-oxoacid dehydrogenase family. Forms a 60-polypeptide structural core with icosahedral symmetry. The cofactor is (R)-lipoate.

The enzyme catalyses N(6)-[(R)-dihydrolipoyl]-L-lysyl-[protein] + acetyl-CoA = N(6)-[(R)-S(8)-acetyldihydrolipoyl]-L-lysyl-[protein] + CoA. Its function is as follows. The pyruvate dehydrogenase complex catalyzes the overall conversion of pyruvate to acetyl-CoA and CO(2). It contains multiple copies of three enzymatic components: pyruvate dehydrogenase (E1), dihydrolipoamide acetyltransferase (E2) and lipoamide dehydrogenase (E3). This Geobacillus stearothermophilus (Bacillus stearothermophilus) protein is Dihydrolipoyllysine-residue acetyltransferase component of pyruvate dehydrogenase complex (pdhC).